The chain runs to 308 residues: Very-long-chain enoyl-CoA reductase (308 aa).

The Cytoplasmic segment spans residues 1-86 (MKHYEVEILD…YFRDLGAQIS (86 aa)). N6-acetyllysine is present on K22. S58 bears the Phosphoserine mark. Residue K60 is modified to N6-acetyllysine. The helical transmembrane segment at 87–106 (WVTVFLTEYAGPLFIYLLFY) threads the bilayer. Topologically, residues 107–124 (FRVPFIYGRKYDFTSSRH) are lumenal. A helical membrane pass occupies residues 125 to 147 (TVVHLACICHSFHYIKRLLETLF). At 148–158 (VHRFSHGTMPL) the chain is on the cytoplasmic side. Residues 159 to 180 (RNIFKNCTYYWGFAAWMAYYIN) traverse the membrane as a helical segment. Residues 181 to 189 (HPLYTPPTY) lie on the Lumenal side of the membrane. A helical transmembrane segment spans residues 190–216 (GAQQVKLALAIFVICQLGNFSIHMALR). Topologically, residues 217-245 (DLRPAGSKTRKIPYPTRNPFTWLFLLVSC) are cytoplasmic. Residues 246 to 262 (PNYTYEVGSWIGFAIMT) form a helical membrane-spanning segment. The Lumenal portion of the chain corresponds to 263 to 264 (QC). Residues 265-292 (LPVALFSLVGFTQMTIWAKGKHRSYLKE) form a helical membrane-spanning segment. Topologically, residues 293–308 (FRDYPPLRMPIIPFLL) are cytoplasmic.

Belongs to the steroid 5-alpha reductase family. Interacts with ELOVL1 and LASS2. Post-translationally, glycosylated.

It localises to the endoplasmic reticulum membrane. It catalyses the reaction a very-long-chain 2,3-saturated fatty acyl-CoA + NADP(+) = a very-long-chain (2E)-enoyl-CoA + NADPH + H(+). The catalysed reaction is octadecanoyl-CoA + NADP(+) = (2E)-octadecenoyl-CoA + NADPH + H(+). The enzyme catalyses (2E,7Z,10Z,13Z,16Z)-docosapentaenoyl-CoA + NADPH + H(+) = (7Z,10Z,13Z,16Z)-docosatetraenoyl-CoA + NADP(+). It carries out the reaction (2E,7Z,10Z,13Z,16Z,19Z)-docosahexaenoyl-CoA + NADPH + H(+) = (7Z,10Z,13Z,16Z,19Z)-docosapentaenoyl-CoA + NADP(+). It catalyses the reaction (2E,8Z,11Z,14Z)-eicosatetraenoyl-CoA + NADPH + H(+) = (8Z,11Z,14Z)-eicosatrienoyl-CoA + NADP(+). The catalysed reaction is (2E)-hexadecenoyl-CoA + NADPH + H(+) = hexadecanoyl-CoA + NADP(+). The protein operates within lipid metabolism; fatty acid biosynthesis. It participates in lipid metabolism; sphingolipid metabolism. Involved in both the production of very long-chain fatty acids for sphingolipid synthesis and the degradation of the sphingosine moiety in sphingolipids through the sphingosine 1-phosphate metabolic pathway. Catalyzes the last of the four reactions of the long-chain fatty acids elongation cycle. This endoplasmic reticulum-bound enzymatic process, allows the addition of 2 carbons to the chain of long- and very long-chain fatty acids/VLCFAs per cycle. This enzyme reduces the trans-2,3-enoyl-CoA fatty acid intermediate to an acyl-CoA that can be further elongated by entering a new cycle of elongation. Thereby, it participates in the production of VLCFAs of different chain lengths that are involved in multiple biological processes as precursors of membrane lipids and lipid mediators. Catalyzes the saturation step of the sphingosine 1-phosphate metabolic pathway, the conversion of trans-2-hexadecenoyl-CoA to palmitoyl-CoA. This chain is Very-long-chain enoyl-CoA reductase (TECR), found in Bos taurus (Bovine).